The chain runs to 267 residues: uncharacterized protein (267 aa).

Residues Met1–Thr55 form a disordered region. Positions Phe9 to Glu24 are enriched in acidic residues. The span at Met29–Lys46 shows a compositional bias: basic residues. Transmembrane regions (helical) follow at residues Tyr93–Leu115, Gly135–Val157, Ala173–Val195, Met199–Gln221, and Tyr234–Ile256.

Its subcellular location is the cell membrane. This is an uncharacterized protein from Bacillus subtilis (strain 168).